We begin with the raw amino-acid sequence, 234 residues long: Large ribosomal subunit protein uL1c (234 aa).

This sequence belongs to the universal ribosomal protein uL1 family. In terms of assembly, part of the 50S ribosomal subunit.

The protein localises to the plastid. It localises to the chloroplast. Its function is as follows. Binds directly to 23S rRNA. Might be involved in E site tRNA release (Potential). The protein is Large ribosomal subunit protein uL1c (rpl1) of Rhodomonas salina (Cryptomonas salina).